The primary structure comprises 436 residues: Glutamyl-tRNA reductase (436 aa).

Substrate-binding positions include 49–52 (TCNR), Ser109, 114–116 (EGQ), and Gln120. Cys50 (nucleophile) is an active-site residue. NADP(+) is bound at residue 198 to 203 (GAGRMS).

Belongs to the glutamyl-tRNA reductase family. Homodimer.

The catalysed reaction is (S)-4-amino-5-oxopentanoate + tRNA(Glu) + NADP(+) = L-glutamyl-tRNA(Glu) + NADPH + H(+). The protein operates within porphyrin-containing compound metabolism; protoporphyrin-IX biosynthesis; 5-aminolevulinate from L-glutamyl-tRNA(Glu): step 1/2. Its pathway is porphyrin-containing compound metabolism; chlorophyll biosynthesis. Catalyzes the NADPH-dependent reduction of glutamyl-tRNA(Glu) to glutamate 1-semialdehyde (GSA). The sequence is that of Glutamyl-tRNA reductase from Prochlorococcus marinus (strain MIT 9215).